The primary structure comprises 72 residues: Large ribosomal subunit protein bL31c (72 aa).

This sequence belongs to the bacterial ribosomal protein bL31 family. Type A subfamily. In terms of assembly, part of the 50S ribosomal subunit.

The protein resides in the plastid. It localises to the chloroplast. Its function is as follows. Binds the 23S rRNA. This Thalassiosira pseudonana (Marine diatom) protein is Large ribosomal subunit protein bL31c (rpl31).